The sequence spans 96 residues: HssA/B-like protein 25 (96 aa).

This sequence belongs to the hssA/B family.

The sequence is that of HssA/B-like protein 25 (hssl25) from Dictyostelium discoideum (Social amoeba).